We begin with the raw amino-acid sequence, 1079 residues long: Electrogenic sodium bicarbonate cotransporter 1 (1079 aa).

The interval 1-62 (MEDEAVLDRG…EKKEKERISE (62 aa)) is required for interaction with AHCYL1. Topologically, residues 1 to 466 (MEDEAVLDRG…FASDFYDALN (466 aa)) are cytoplasmic. Glu-21 carries the post-translational modification Phosphoserine. Tyr-30 bears the Phosphotyrosine mark. Residues 39–52 (YRRRRRHKRKAGHK) are compositionally biased toward basic residues. A disordered region spans residues 39 to 78 (YRRRRRHKRKAGHKEKKEKERISENYSDKSDVENADESSS). Positions 53 to 70 (EKKEKERISENYSDKSDV) are enriched in basic and acidic residues. A phosphoserine mark is found at Ser-61, Ser-65, Ser-68, Ser-223, Ser-232, Ser-233, and Ser-245. The tract at residues 235–266 (SRMFSNPDNGSPAMTHRNLTSSSLNDISDKPE) is disordered. Phosphothreonine occurs at positions 249 and 254. Residues 251–260 (RNLTSSSLND) show a composition bias toward polar residues. Ser-256, Ser-257, and Ser-262 each carry phosphoserine. A helical membrane pass occupies residues 467-491 (IQALSAILFIYLATVTNAITFGGLL). Residues 492–501 (GDATDNMQGV) are Extracellular-facing. A helical membrane pass occupies residues 502–520 (LESFLGTAVSGAIFCLFAG). Position 521 (Gln-521) is a topological domain, cytoplasmic. A discontinuously helical membrane pass occupies residues 522-542 (PLTILSSTGPVLVFERLLFNF). The Extracellular segment spans residues 543–550 (SKDHNFDY). A helical transmembrane segment spans residues 551–571 (LEFRLWIGLWSAFMCLVLVAT). Residues 572–585 (DASFLVQYFTRFTE) are Cytoplasmic-facing. The helical transmembrane segment at 586–609 (EGFSSLISFIFIYDAFKKMIKLAD) threads the bilayer. Over 610–692 (YYPINSDFKV…GNNCDFVPDI (83 aa)) the chain is Extracellular. A helical transmembrane segment spans residues 693-710 (TLMSFILFLGTYTSSMAM). The Cytoplasmic portion of the chain corresponds to 711-725 (KKFKTSRYFPTTARK). The chain crosses the membrane as a helical span at residues 726 to 745 (LISDFAIILSILIFCVIDAL). Residues 746-779 (VGVDTPKLIVPSEFKPTSPNRGWFVPPFGGNPWW) lie on the Extracellular side of the membrane. The interaction with CA4 stretch occupies residues 748–779 (VDTPKLIVPSEFKPTSPNRGWFVPPFGGNPWW). The chain crosses the membrane as a helical span at residues 780 to 807 (VCLAAAIPALLVTILIFMDQQITAVIVN). The Cytoplasmic segment spans residues 808–819 (RKEHKLKKGAGY). A helical transmembrane segment spans residues 820–836 (HLDLFWVAILMVVCSFM). Ala-837 is a topological domain (extracellular). Residues 838–855 (LPWYVAATVISIAHIDSL) form a discontinuously helical membrane-spanning segment. Over 856–877 (KMETETSAPGEQPKFLGVREQR) the chain is Cytoplasmic. Residues 878 to 894 (VTGTLVFILTGLSVFMA) form a helical membrane-spanning segment. The Extracellular portion of the chain corresponds to 895–901 (PILKFIP). Residues 902 to 918 (MPVLYGVFLYMGVASLN) traverse the membrane as a helical segment. At 919–960 (GVQFMDRLKLLLMPLKHQPDFIYLRHVPLRRVHLFTFLQVLC) the chain is on the cytoplasmic side. The discontinuously helical intramembrane region spans 961 to 986 (LALLWILKSTVAAIIFPVMILALVAV). Residues 987 to 1079 (RKGMDYLFSQ…STFLERHTSC (93 aa)) are Cytoplasmic-facing. A CA2-binding region spans residues 1002-1004 (LDD). Residues 1012–1079 (KKKEDEKKKK…STFLERHTSC (68 aa)) form a disordered region. Ser-1026 and Ser-1029 each carry phosphoserine. The CA2-binding stretch occupies residues 1030–1033 (DNDD). Residues Ser-1034 and Ser-1044 each carry the phosphoserine modification. The tract at residues 1057–1059 (FLS) is required for basolateral targeting. Basic and acidic residues predominate over residues 1062–1079 (KPLDRERSSTFLERHTSC). Ser-1069 bears the Phosphoserine mark.

It belongs to the anion exchanger (TC 2.A.31) family. In terms of assembly, homodimer. Interacts with CA2/carbonic anhydrase 2 and CA4/carbonic anhydrase 4 which may regulate transporter activity. Isoform 1 but not isoform 2 interacts with AHCYL1 (via PEST domain when phosphorylated); the interaction increases SLC4A4 isoform 1 activity. Interacts with AHCYL2. Phosphorylation of Ser-1026 by PKA increases the binding of CA2 and changes the Na(+):HCO3(-) stoichiometry of the transporter from 3:1 to 2:1. Phosphorylated in presence of STK39 and dephosphorylated in presence of PP1 phosphatase; phosphorylation seems to inhibit SLC4A4 activity. Post-translationally, N-glycosylated. May not be necessary for the transporter basic functions. Isoform 1 is specifically expressed in pancreatic ducts and acini. Also expressed in parotid acinar cells and in the colonic crypts.

Its subcellular location is the basolateral cell membrane. It localises to the cell membrane. The catalysed reaction is 2 hydrogencarbonate(out) + Na(+)(out) = 2 hydrogencarbonate(in) + Na(+)(in). The enzyme catalyses 3 hydrogencarbonate(out) + Na(+)(out) = 3 hydrogencarbonate(in) + Na(+)(in). With respect to regulation, activated by cyclic AMP. Its function is as follows. Electrogenic sodium/bicarbonate cotransporter with a Na(+):HCO3(-) stoichiometry varying from 1:2 to 1:3. May regulate bicarbonate influx/efflux at the basolateral membrane of cells and regulate intracellular pH. This chain is Electrogenic sodium bicarbonate cotransporter 1 (Slc4a4), found in Mus musculus (Mouse).